The following is a 260-amino-acid chain: Indole-3-glycerol phosphate synthase (260 aa).

It belongs to the TrpC family.

It catalyses the reaction 1-(2-carboxyphenylamino)-1-deoxy-D-ribulose 5-phosphate + H(+) = (1S,2R)-1-C-(indol-3-yl)glycerol 3-phosphate + CO2 + H2O. It participates in amino-acid biosynthesis; L-tryptophan biosynthesis; L-tryptophan from chorismate: step 4/5. This is Indole-3-glycerol phosphate synthase from Thermoanaerobacter sp. (strain X514).